The chain runs to 128 residues: Natriuretic peptides A (128 aa).

The tract at residues 36–84 (QVASEQNEEAGAVLSALPEVPSWPGEAGPAQREGGALGRGPWDSSDRSA) is disordered. Positions 68 to 78 (EGGALGRGPWD) are excised as a propeptide. Position 104 is a phosphoserine (serine 104). Cysteine 105 and cysteine 121 form a disulfide bridge. The interval 122–126 (NSFRY) is important for degradation of atrial natriuretic peptide by IDE.

This sequence belongs to the natriuretic peptide family. In terms of assembly, homodimer; disulfide-linked antiparallel dimer. In terms of processing, the precursor molecule is proteolytically cleaved by CORIN at Arg-98 to produce atrial natriuretic peptide. Undergoes further proteolytic cleavage by unknown proteases to give rise to long-acting natriuretic peptide, vessel dilator and kaliuretic peptide. Additional processing gives rise to the auriculin and atriopeptin peptides. In the kidneys, alternative processing by an unknown protease results in the peptide urodilatin. Post-translationally, cleavage by MME initiates degradation of the factor and thereby regulates its activity. Degraded by IDE (in vitro). During IDE degradation, the resulting products can temporarily stimulate NPR2 to produce cGMP, before the fragments are completely degraded and inactivated by IDE (in vitro). Degraded by IDE. In terms of processing, phosphorylation on Ser-104 decreases vasorelaxant activity.

It is found in the secreted. The protein resides in the perikaryon. Its subcellular location is the cell projection. In terms of biological role, hormone that plays a key role in mediating cardio-renal homeostasis, and is involved in vascular remodeling and regulating energy metabolism. Acts by specifically binding and stimulating NPR1 to produce cGMP, which in turn activates effector proteins, such as PRKG1, that drive various biological responses. Regulates vasodilation, natriuresis, diuresis and aldosterone synthesis and is therefore essential for regulating blood pressure, controlling the extracellular fluid volume and maintaining the fluid-electrolyte balance. Also involved in inhibiting cardiac remodeling and cardiac hypertrophy by inducing cardiomyocyte apoptosis and attenuating the growth of cardiomyocytes and fibroblasts. Plays a role in female pregnancy by promoting trophoblast invasion and spiral artery remodeling in uterus, and thus prevents pregnancy-induced hypertension. In adipose tissue, acts in various cGMP- and PKG-dependent pathways to regulate lipid metabolism and energy homeostasis. This includes up-regulating lipid metabolism and mitochondrial oxygen utilization by activating the AMP-activated protein kinase (AMPK), and increasing energy expenditure by acting via MAPK11 to promote the UCP1-dependent thermogenesis of brown adipose tissue. Binds the clearance receptor NPR3 which removes the hormone from circulation. Functionally, may have a role in cardio-renal homeostasis through regulation of natriuresis, diuresis, vasodilation, and inhibiting aldosterone synthesis. In vitro, promotes the production of cGMP and induces vasodilation. May promote natriuresis, at least in part, by enhancing prostaglandin E2 synthesis resulting in the inhibition of renal Na+-K+-ATPase. However reports on the involvement of this peptide in mammal blood volume and blood pressure homeostasis are conflicting; according to a report, in vivo it is not sufficient to activate cGMP and does not inhibit collecting duct transport nor effect diuresis and natriuresis. Appears to bind to specific receptors that are distinct from the receptors bound by atrial natriuretic peptide and vessel dilator. Possibly enhances protein excretion in urine by decreasing proximal tubular protein reabsorption. May have a role in cardio-renal homeostasis through regulation of natriuresis, diuresis, and vasodilation. In vitro, promotes the production of cGMP and induces vasodilation. May promote natriuresis, at least in part, by enhancing prostaglandin E2 synthesis resulting in the inhibition of renal Na+-K+-ATPase. However reports on the involvement of this peptide in mammal blood volume and blood pressure homeostasis are conflicting; according to a report it is not sufficient to activate cGMP and does not inhibit collecting duct transport nor effect diuresis and natriuresis. Appears to bind to specific receptors that are distinct from the receptors bound by the atrial natriuretic and long-acting natriuretic peptides. Possibly functions in protein excretion in urine by maintaining the integrity of the proximal tubules and enhancing protein excretion by decreasing proximal tubular protein reabsorption. Its function is as follows. May have a role in cardio-renal homeostasis through regulation of diuresis and inhibiting aldosterone synthesis. In vitro, promotes the production of cGMP and induces vasodilation. May promote natriuresis, at least in part, by enhancing prostaglandin E2 synthesis resulting in the inhibition of renal Na+-K+-ATPase. May have a role in potassium excretion but not sodium excretion (natriuresis). Possibly enhances protein excretion in urine by decreasing proximal tubular protein reabsorption. In terms of biological role, hormone produced in the kidneys that appears to be important for maintaining cardio-renal homeostasis. Mediates vasodilation, natriuresis and diuresis primarily in the renal system, in order to maintain the extracellular fluid volume and control the fluid-electrolyte balance. Specifically binds and stimulates cGMP production by renal transmembrane receptors, likely NPR1. Urodilatin not ANP, may be the natriuretic peptide responsible for the regulation of sodium and water homeostasis in the kidney. Functionally, may have a role in cardio-renal homeostasis through regulation of natriuresis and vasodilation. In vivo promotes natriuresis and in vitro, vasodilates renal artery strips. May have a role in cardio-renal homeostasis through regulation of regulation of natriuresis and vasodilation. In vivo promotes natriuresis. In vitro, vasodilates intestinal smooth muscle but not smooth muscle strips. Its function is as follows. May have a role in cardio-renal homeostasis through regulation of natriuresis and vasodilation. In vivo promotes natriuresis. In vitro, selectively vasodilates intestinal and vascular smooth muscle strips. In terms of biological role, may have a role in cardio-renal homeostasis through regulation of natriuresis and vasodilation. In vivo promotes natriuresis. In vitro, selectively vasodilates intestinal smooth muscle but not vascular smooth muscle strips. The protein is Natriuretic peptides A (NPPA) of Cavia porcellus (Guinea pig).